The following is an 85-amino-acid chain: Large ribosomal subunit protein bL27 (85 aa).

The tract at residues 1 to 22 (MAHKKAGGSTRNGRDSESKRLG) is disordered.

Belongs to the bacterial ribosomal protein bL27 family.

The protein is Large ribosomal subunit protein bL27 of Vibrio vulnificus (strain CMCP6).